Consider the following 176-residue polypeptide: Ribosome maturation factor RimP (176 aa).

The disordered stretch occupies residues 143 to 176 (LKPQTAKKKGRQEETEDMTLELDAVSRAVPEAEI).

The protein belongs to the RimP family.

It localises to the cytoplasm. Functionally, required for maturation of 30S ribosomal subunits. This Chlorobium luteolum (strain DSM 273 / BCRC 81028 / 2530) (Pelodictyon luteolum) protein is Ribosome maturation factor RimP.